Reading from the N-terminus, the 833-residue chain is Urease (833 aa).

In terms of domain architecture, Urease spans 395–833; it reads GALDVHVHYI…LPLTKRYFVY (439 aa). The Ni(2+) site is built by His-400 and His-402. The urea site is built by His-402 and Ala-433. Lys-483 is a binding site for Ni(2+). The residue at position 483 (Lys-483) is an N6-carboxylysine. Residues His-485 and His-512 each coordinate urea. Residues His-512 and His-538 each contribute to the Ni(2+) site. His-586 acts as the Proton donor in catalysis. Asp-626 provides a ligand contact to Ni(2+). Ala-629 is a urea binding site.

In the C-terminal section; belongs to the metallo-dependent hydrolases superfamily. Urease alpha subunit family. As to quaternary structure, homohexamer. Ni(2+) serves as cofactor. Carboxylation allows a single lysine to coordinate two nickel ions.

The enzyme catalyses urea + 2 H2O + H(+) = hydrogencarbonate + 2 NH4(+). It functions in the pathway nitrogen metabolism; urea degradation; CO(2) and NH(3) from urea (urease route): step 1/1. The urease accessory proteins URE4, URE6 and URE7 are required for urease activity, URE7 supplying nickel for the functional urease. Functionally, plays a nutritional role via nitrogen acquisition in the environment. Contributes to the central nervous system invasion by enhancing yeast sequestration within microcapillary beds (such as within the brain) during hematogenous spread, thereby facilitating blood-to-brain invasion by C.neoformans. Affects fitness within the mammalian phagosome, promoting non-lytic exocytosis while delaying intracellular replication and thus reducing phagolysosomal membrane damage, events that could facilitate cryptococcal dissemination when transported inside macrophages. Urease activity is also associated with the regulation of key intracellular metabolic pathways, including melanin biosynthesis, polyamine biosynthesis, as well as intracellular levels of proline and reactive oxygen species. This is Urease from Cryptococcus neoformans var. neoformans serotype D (strain B-3501A) (Filobasidiella neoformans).